The following is a 292-amino-acid chain: NAD kinase (292 aa).

Residue aspartate 73 is the Proton acceptor of the active site. NAD(+) is bound by residues 73-74, 147-148, histidine 158, arginine 175, aspartate 177, 188-193, and glutamine 247; these read DG, NE, and TAYSLS.

The protein belongs to the NAD kinase family. A divalent metal cation serves as cofactor.

It localises to the cytoplasm. It carries out the reaction NAD(+) + ATP = ADP + NADP(+) + H(+). Involved in the regulation of the intracellular balance of NAD and NADP, and is a key enzyme in the biosynthesis of NADP. Catalyzes specifically the phosphorylation on 2'-hydroxyl of the adenosine moiety of NAD to yield NADP. The chain is NAD kinase from Photorhabdus laumondii subsp. laumondii (strain DSM 15139 / CIP 105565 / TT01) (Photorhabdus luminescens subsp. laumondii).